Here is a 477-residue protein sequence, read N- to C-terminus: Aspartyl/glutamyl-tRNA(Asn/Gln) amidotransferase subunit B (477 aa).

It belongs to the GatB/GatE family. GatB subfamily. In terms of assembly, heterotrimer of A, B and C subunits.

It carries out the reaction L-glutamyl-tRNA(Gln) + L-glutamine + ATP + H2O = L-glutaminyl-tRNA(Gln) + L-glutamate + ADP + phosphate + H(+). The enzyme catalyses L-aspartyl-tRNA(Asn) + L-glutamine + ATP + H2O = L-asparaginyl-tRNA(Asn) + L-glutamate + ADP + phosphate + 2 H(+). Its function is as follows. Allows the formation of correctly charged Asn-tRNA(Asn) or Gln-tRNA(Gln) through the transamidation of misacylated Asp-tRNA(Asn) or Glu-tRNA(Gln) in organisms which lack either or both of asparaginyl-tRNA or glutaminyl-tRNA synthetases. The reaction takes place in the presence of glutamine and ATP through an activated phospho-Asp-tRNA(Asn) or phospho-Glu-tRNA(Gln). The sequence is that of Aspartyl/glutamyl-tRNA(Asn/Gln) amidotransferase subunit B from Legionella pneumophila (strain Lens).